We begin with the raw amino-acid sequence, 70 residues long: Small ribosomal subunit protein bS21 (70 aa).

The protein belongs to the bacterial ribosomal protein bS21 family.

In Wolinella succinogenes (strain ATCC 29543 / DSM 1740 / CCUG 13145 / JCM 31913 / LMG 7466 / NCTC 11488 / FDC 602W) (Vibrio succinogenes), this protein is Small ribosomal subunit protein bS21.